The sequence spans 191 residues: Glutathione S-transferase Y-2 (191 aa).

The GST N-terminal domain occupies 2–80; the sequence is TFATVYIKPH…YIVAKGSKPE (79 aa). The GST C-terminal domain maps to 85–191; the sequence is TTEERATNTR…VSQHPIIKNM (107 aa).

Belongs to the GST superfamily.

The catalysed reaction is RX + glutathione = an S-substituted glutathione + a halide anion + H(+). Functionally, conjugation of reduced glutathione to a wide number of exogenous and endogenous hydrophobic electrophiles. This chain is Glutathione S-transferase Y-2 (GSTY2), found in Pichia kudriavzevii (Yeast).